The chain runs to 132 residues: DNA-directed RNA polymerase subunit omega (132 aa).

Positions 76-105 (EVDEPEQDAASIAEGQLTSGSQDEDEMPET) are disordered.

It belongs to the RNA polymerase subunit omega family. The RNAP catalytic core consists of 2 alpha, 1 beta, 1 beta' and 1 omega subunit. When a sigma factor is associated with the core the holoenzyme is formed, which can initiate transcription.

The enzyme catalyses RNA(n) + a ribonucleoside 5'-triphosphate = RNA(n+1) + diphosphate. Its function is as follows. Promotes RNA polymerase assembly. Latches the N- and C-terminal regions of the beta' subunit thereby facilitating its interaction with the beta and alpha subunits. The protein is DNA-directed RNA polymerase subunit omega of Allorhizobium ampelinum (strain ATCC BAA-846 / DSM 112012 / S4) (Agrobacterium vitis (strain S4)).